The following is an 87-amino-acid chain: UPF0147 protein AF_2370.1 (87 aa).

The protein belongs to the UPF0147 family.

This chain is UPF0147 protein AF_2370.1, found in Archaeoglobus fulgidus (strain ATCC 49558 / DSM 4304 / JCM 9628 / NBRC 100126 / VC-16).